The primary structure comprises 106 residues: Nucleoid-associated protein XC_3243 (106 aa).

The segment at 82 to 106 (DAESKERMGSATAGMQLPPGMKLPF) is disordered.

It belongs to the YbaB/EbfC family. In terms of assembly, homodimer.

It localises to the cytoplasm. It is found in the nucleoid. Binds to DNA and alters its conformation. May be involved in regulation of gene expression, nucleoid organization and DNA protection. The polypeptide is Nucleoid-associated protein XC_3243 (Xanthomonas campestris pv. campestris (strain 8004)).